A 1097-amino-acid chain; its full sequence is Transmembrane protein 132D (1097 aa).

The N-terminal stretch at 1–30 (MCPSEMGTLWYLWSPVLISLAALFSKVTEG) is a signal peptide. The Extracellular segment spans residues 31–913 (RGILESIQRF…LDQAAKGLSD (883 aa)). The span at 233 to 245 (DERGDCAKEDSRK) shows a compositional bias: basic and acidic residues. Positions 233 to 263 (DERGDCAKEDSRKSGGTPAGHNDVDESSPPL) are disordered. The chain crosses the membrane as a helical span at residues 914–934 (LEIGMYALLGVFCLAILVFLI). Residues 935 to 1097 (NCVTFALKYR…SCMERLHEHV (163 aa)) lie on the Cytoplasmic side of the membrane. Positions 1021–1042 (MLTDDQEQKSEPPTSPTSKRKR) are disordered.

The protein belongs to the TMEM132 family. As to expression, expressed in mature oligodendrocytes in the white and gray matter of the brain.

It localises to the membrane. Its function is as follows. Regulates neuronal morphology via inhibition of the WAVE regulatory complex (WCR), a complex that controls F-actin cytoskeletal dynamics. This chain is Transmembrane protein 132D (Tmem132d), found in Mus musculus (Mouse).